The sequence spans 1276 residues: Probable ubiquitin carboxyl-terminal hydrolase K02C4.3 (1276 aa).

The USP domain maps to 168 to 762 (TGLYNSGNTC…SAYMLMYVRS (595 aa)). The active-site Nucleophile is Cys177. The disordered stretch occupies residues 375 to 402 (SMDTEAATSSNLPGNSVENHPNPAAPEV). Residues 380-393 (AATSSNLPGNSVEN) are compositionally biased toward polar residues. The active-site Proton acceptor is the His707.

This sequence belongs to the peptidase C19 family.

It catalyses the reaction Thiol-dependent hydrolysis of ester, thioester, amide, peptide and isopeptide bonds formed by the C-terminal Gly of ubiquitin (a 76-residue protein attached to proteins as an intracellular targeting signal).. This Caenorhabditis elegans protein is Probable ubiquitin carboxyl-terminal hydrolase K02C4.3.